The sequence spans 340 residues: Probable D,D-dipeptide transport system permease protein DdpB (340 aa).

At 1-11 (MTFWSILRQRC) the chain is on the periplasmic side. Residues 12–32 (WGLVLVVAGVCVITFIISHLI) form a helical membrane-spanning segment. The Cytoplasmic portion of the chain corresponds to 33–104 (PGDPARLLAG…IFFPATLELA (72 aa)). The region spanning 97 to 327 (FPATLELAFG…LVNLVVDLLY (231 aa)) is the ABC transmembrane type-1 domain. The helical transmembrane segment at 105 to 125 (FGALLLALLIGIPLGILSAVW) threads the bilayer. Residues 126–135 (RNRWLDHLVR) are Periplasmic-facing. Residues 136–156 (IMAITGISTPAFWLGLGVIVL) form a helical membrane-spanning segment. Over 157-199 (FYGHLQILPGGGRLDDWLDPPTHVTGFYLLDALLEGNGEVFFN) the chain is Cytoplasmic. The helical transmembrane segment at 200–220 (ALQHLILPALTLAFVHLGIVA) threads the bilayer. Over 221 to 246 (RQIRSAMLEQLSEDYIRTARASGLPG) the chain is Periplasmic. Residues 247–269 (WYIVLCYALPNALIPSITVLGLA) traverse the membrane as a helical segment. The Cytoplasmic portion of the chain corresponds to 270–279 (LGDLLYGAVL). The helical transmembrane segment at 280-300 (TETVFAWPGMGAWVVTSIQAL) threads the bilayer. Residue aspartate 301 is a topological domain, periplasmic. A helical transmembrane segment spans residues 302–322 (FPAVMGFAVVVSFAYVLVNLV). The Cytoplasmic portion of the chain corresponds to 323-340 (VDLLYLWIDPRIGRGGGE).

Belongs to the binding-protein-dependent transport system permease family. OppBC subfamily. The complex is composed of two ATP-binding proteins (DdpD and DdpF), two transmembrane proteins (DdpB and DdpC) and a solute-binding protein (DdpA).

Its subcellular location is the cell inner membrane. In terms of biological role, part of the ABC transporter complex DdpABCDF, which is probably involved in D,D-dipeptide transport. Probably responsible for the translocation of the substrate across the membrane. The protein is Probable D,D-dipeptide transport system permease protein DdpB (ddpB) of Escherichia coli (strain K12).